Here is a 624-residue protein sequence, read N- to C-terminus: Na(+)/H(+) antiporter NhaA (624 aa).

A unknown region spans residues 1–164; sequence MNPELPPNHL…TFFINGRRYD (164 aa). A na(+)/H(+) antiporter NhaA region spans residues 165–624; that stretch reads GPWDVRSLSE…NAQAEEEKNP (460 aa). The next 11 helical transmembrane spans lie at 199–219, 240–260, 279–299, 319–339, 348–368, 371–391, 407–427, 497–517, 521–541, 565–585, and 596–616; these read GIML…ALGP, LSLR…VVGL, LPIA…LILV, GWGV…AMMG, VFLT…VAIF, GELH…LALL, IVLW…GIIL, FLVL…TSVF, IPLM…GFIT, GAGA…SQAF, and IAIF…LWNA.

This sequence belongs to the NhaA Na(+)/H(+) (TC 2.A.33) antiporter family.

Its subcellular location is the cell inner membrane. The enzyme catalyses Na(+)(in) + 2 H(+)(out) = Na(+)(out) + 2 H(+)(in). Its function is as follows. Na(+)/H(+) antiporter that extrudes sodium in exchange for external protons. The chain is Na(+)/H(+) antiporter NhaA from Nitrosospira multiformis (strain ATCC 25196 / NCIMB 11849 / C 71).